The chain runs to 247 residues: 14-3-3 protein gamma (247 aa).

It belongs to the 14-3-3 family. Homodimer, and heterodimer with other family members.

The protein resides in the cytoplasm. Functionally, adapter protein implicated in the regulation of a large spectrum of both general and specialized signaling pathways. Binds to a large number of partners, usually by recognition of a phosphoserine or phosphothreonine motif. Binding generally results in the modulation of the activity of the binding partner. In Gallus gallus (Chicken), this protein is 14-3-3 protein gamma (YWHAG).